The primary structure comprises 535 residues: Glucose-6-phosphate isomerase (535 aa).

Residue glutamate 359 is the Proton donor of the active site. Residues histidine 390 and lysine 505 contribute to the active site.

The protein belongs to the GPI family.

The protein resides in the cytoplasm. The enzyme catalyses alpha-D-glucose 6-phosphate = beta-D-fructose 6-phosphate. Its pathway is carbohydrate biosynthesis; gluconeogenesis. It functions in the pathway carbohydrate degradation; glycolysis; D-glyceraldehyde 3-phosphate and glycerone phosphate from D-glucose: step 2/4. Functionally, catalyzes the reversible isomerization of glucose-6-phosphate to fructose-6-phosphate. The protein is Glucose-6-phosphate isomerase of Treponema pallidum (strain Nichols).